The sequence spans 138 residues: Small ribosomal subunit protein uS11c (138 aa).

Residues 1–22 (MTKPIPRIGSRRSGRIGSRKAG) are disordered. The span at 9 to 22 (GSRRSGRIGSRKAG) shows a compositional bias: basic residues.

This sequence belongs to the universal ribosomal protein uS11 family. In terms of assembly, part of the 30S ribosomal subunit.

Its subcellular location is the plastid. The protein localises to the chloroplast. The protein is Small ribosomal subunit protein uS11c of Piper cenocladum (Ant piper).